The primary structure comprises 419 residues: MVSARGILYYLSHPQELRPMIQWKVFHGLAHQRDEKNESPDVQACYYYLALTSRSFVAVCQQLDPELLMPICIFYLVLRGLDTIEDDMTLSTEVKEPLLRNFHTTIYDQSWTFHDSGPDEKDRELLVHFDCVAREFAKVKDEYKVIITDITKKMGNGMADFVVNGELTGVRKIEDYELYCHYVAGVVGEGLTRLFVEAKVAEPSLLENPKLIESMGQFLQQTNIIRDVREDHDEVRHFWPKEVWAKYADDFDQLVSPIPQNRQKALQCSSEMVLMALNRADDCLNYISGVREQSVFNFVAIPQSMAIATLELCFQNPAIFDKNIKITKGTACQLMMDSTQDMQHVCQAFRRHARRIQKKNNPKDPHFHDINAACNKIERFIDGRYPNLQDEQAKADTMYLVVLLLGILGVAAAVLMAKR.

A helical membrane pass occupies residues 397–417 (TMYLVVLLLGILGVAAAVLMA).

The protein belongs to the phytoene/squalene synthase family. Requires Mg(2+) as cofactor.

Its subcellular location is the membrane. It catalyses the reaction 2 (2E,6E)-farnesyl diphosphate + NADPH + H(+) = squalene + 2 diphosphate + NADP(+). The enzyme catalyses 2 (2E,6E)-farnesyl diphosphate + NADH + H(+) = squalene + 2 diphosphate + NAD(+). The protein operates within terpene metabolism; lanosterol biosynthesis; lanosterol from farnesyl diphosphate: step 1/3. In terms of biological role, squalene synthase; part of the gene cluster that mediates the biosynthesis of squalestatin S1 (SQS1, also known as zaragozic acid A), a heavily oxidized fungal polyketide that offers potent cholesterol lowering activity by targeting squalene synthase (SS). Catalyzes the condensation of 2 two farnesyl pyrophosphate moieties to form squalene. The presence of a gene encoding a squalene synthase supports the identification of the cluster as being responsible for SQS1 production and suggests a likely mechanism for self-resistance. The protein is Squalene synthase R6 of Phoma sp. (strain ATCC 20986 / MF5453).